The primary structure comprises 127 residues: Protein LLP homolog (127 aa).

The span at 1–21 shows a compositional bias: basic residues; the sequence is MAKSLRSKWKRKMRAEKRKKN. The interval 1–24 is disordered; it reads MAKSLRSKWKRKMRAEKRKKNAPK. Residues Lys-65 and Lys-72 each participate in a glycyl lysine isopeptide (Lys-Gly) (interchain with G-Cter in SUMO2) cross-link. Positions 98–120 are enriched in basic residues; it reads RQRKRLKAKRERKKGKSKVKAMK. Positions 98-127 are disordered; that stretch reads RQRKRLKAKRERKKGKSKVKAMKAAKGLTW.

This sequence belongs to the learning-associated protein family. As to quaternary structure, interacts with CTCF, MYO1C and with the transcriptional machinery, including RNA polymerase II and TBP.

The protein localises to the nucleus. Its subcellular location is the nucleolus. The protein resides in the chromosome. Its function is as follows. In hippocampal neurons, regulates dendritic and spine growth and synaptic transmission. This Bos taurus (Bovine) protein is Protein LLP homolog (LLPH).